Reading from the N-terminus, the 945-residue chain is Isoleucine--tRNA ligase (945 aa).

The short motif at 66-76 (PYANGDIHLGH) is the 'HIGH' region element. L-isoleucyl-5'-AMP is bound at residue E581. The short motif at 622–626 (KMSKS) is the 'KMSKS' region element. K625 is an ATP binding site. Zn(2+)-binding residues include C908, C911, C928, and C931.

The protein belongs to the class-I aminoacyl-tRNA synthetase family. IleS type 1 subfamily. In terms of assembly, monomer. The cofactor is Zn(2+).

The protein resides in the cytoplasm. The catalysed reaction is tRNA(Ile) + L-isoleucine + ATP = L-isoleucyl-tRNA(Ile) + AMP + diphosphate. Catalyzes the attachment of isoleucine to tRNA(Ile). As IleRS can inadvertently accommodate and process structurally similar amino acids such as valine, to avoid such errors it has two additional distinct tRNA(Ile)-dependent editing activities. One activity is designated as 'pretransfer' editing and involves the hydrolysis of activated Val-AMP. The other activity is designated 'posttransfer' editing and involves deacylation of mischarged Val-tRNA(Ile). This is Isoleucine--tRNA ligase from Paraburkholderia phymatum (strain DSM 17167 / CIP 108236 / LMG 21445 / STM815) (Burkholderia phymatum).